The chain runs to 245 residues: Small ribosomal subunit protein uS2 (245 aa).

It belongs to the universal ribosomal protein uS2 family.

The chain is Small ribosomal subunit protein uS2 from Pseudomonas putida (strain ATCC 47054 / DSM 6125 / CFBP 8728 / NCIMB 11950 / KT2440).